The following is a 506-amino-acid chain: Cysteine--tRNA ligase (506 aa).

Cysteine 34 provides a ligand contact to Zn(2+). Positions 36 to 46 match the 'HIGH' region motif; that stretch reads PTVYDFAHIGN. The Zn(2+) site is built by cysteine 230, histidine 269, and glutamate 273. Residues 302–306 carry the 'KMSKS' region motif; that stretch reads KMSKS. Lysine 305 is a binding site for ATP.

The protein belongs to the class-I aminoacyl-tRNA synthetase family. In terms of assembly, monomer. Requires Zn(2+) as cofactor.

It localises to the cytoplasm. The enzyme catalyses tRNA(Cys) + L-cysteine + ATP = L-cysteinyl-tRNA(Cys) + AMP + diphosphate. This Brucella suis (strain ATCC 23445 / NCTC 10510) protein is Cysteine--tRNA ligase.